The sequence spans 205 residues: uncharacterized protein (205 aa).

This is an uncharacterized protein from Sinorhizobium fredii (strain NBRC 101917 / NGR234).